A 669-amino-acid polypeptide reads, in one-letter code: Translation factor GUF1, mitochondrial (669 aa).

The transit peptide at 1-49 (MWTLVGRGWGCARALAPRATGAALLVAPGPRSAPTLGAAPESWATDRLY) directs the protein to the mitochondrion. Positions 66 to 247 (ENIRNFSIVA…AIIERIPPPK (182 aa)) constitute a tr-type G domain. GTP contacts are provided by residues 75 to 82 (AHVDHGKS), 140 to 144 (DTPGH), and 194 to 197 (NKID).

Belongs to the TRAFAC class translation factor GTPase superfamily. Classic translation factor GTPase family. LepA subfamily.

It is found in the mitochondrion inner membrane. It catalyses the reaction GTP + H2O = GDP + phosphate + H(+). Promotes mitochondrial protein synthesis. May act as a fidelity factor of the translation reaction, by catalyzing a one-codon backward translocation of tRNAs on improperly translocated ribosomes. Binds to mitochondrial ribosomes in a GTP-dependent manner. This is Translation factor GUF1, mitochondrial from Homo sapiens (Human).